Consider the following 384-residue polypeptide: Putative glutamate--cysteine ligase 2-1 (384 aa).

Belongs to the glutamate--cysteine ligase type 2 family. YbdK subfamily.

It catalyses the reaction L-cysteine + L-glutamate + ATP = gamma-L-glutamyl-L-cysteine + ADP + phosphate + H(+). Its function is as follows. ATP-dependent carboxylate-amine ligase which exhibits weak glutamate--cysteine ligase activity. This chain is Putative glutamate--cysteine ligase 2-1, found in Paenarthrobacter aurescens (strain TC1).